The primary structure comprises 90 residues: U7-theraphotoxin-Hhn1a 4 (90 aa).

An N-terminal signal peptide occupies residues 1 to 19; that stretch reads MKTAIFTVVLALAVFAVLS. Residues 20–50 constitute a propeptide that is removed on maturation; that stretch reads FGWEANEEALSEEFTELIHEKEAASETEARE. 3 disulfides stabilise this stretch: Cys51–Cys65, Cys58–Cys70, and Cys64–Cys81.

The protein belongs to the neurotoxin 10 (Hwtx-1) family. 13 (Hntx-13) subfamily. In terms of tissue distribution, expressed by the venom gland.

Its subcellular location is the secreted. Functionally, ion channel inhibitor. The polypeptide is U7-theraphotoxin-Hhn1a 4 (Cyriopagopus hainanus (Chinese bird spider)).